We begin with the raw amino-acid sequence, 296 residues long: GTP cyclohydrolase FolE2 (296 aa).

It belongs to the GTP cyclohydrolase IV family.

The catalysed reaction is GTP + H2O = 7,8-dihydroneopterin 3'-triphosphate + formate + H(+). The protein operates within cofactor biosynthesis; 7,8-dihydroneopterin triphosphate biosynthesis; 7,8-dihydroneopterin triphosphate from GTP: step 1/1. In terms of biological role, converts GTP to 7,8-dihydroneopterin triphosphate. This is GTP cyclohydrolase FolE2 from Ectopseudomonas mendocina (strain ymp) (Pseudomonas mendocina).